The chain runs to 223 residues: Deoxyribose-phosphate aldolase (223 aa).

D91 serves as the catalytic Proton donor/acceptor. The active-site Schiff-base intermediate with acetaldehyde is the K153. K182 functions as the Proton donor/acceptor in the catalytic mechanism.

The protein belongs to the DeoC/FbaB aldolase family. DeoC type 1 subfamily.

The protein resides in the cytoplasm. It catalyses the reaction 2-deoxy-D-ribose 5-phosphate = D-glyceraldehyde 3-phosphate + acetaldehyde. It functions in the pathway carbohydrate degradation; 2-deoxy-D-ribose 1-phosphate degradation; D-glyceraldehyde 3-phosphate and acetaldehyde from 2-deoxy-alpha-D-ribose 1-phosphate: step 2/2. Catalyzes a reversible aldol reaction between acetaldehyde and D-glyceraldehyde 3-phosphate to generate 2-deoxy-D-ribose 5-phosphate. This chain is Deoxyribose-phosphate aldolase, found in Yersinia pestis bv. Antiqua (strain Angola).